The sequence spans 104 residues: Large ribosomal subunit protein uL15z (104 aa).

Belongs to the universal ribosomal protein uL15 family.

The protein is Large ribosomal subunit protein uL15z (RPL27AA) of Arabidopsis thaliana (Mouse-ear cress).